The primary structure comprises 318 residues: MALKQLRIGTRASQLALWQANWVKSELEQRYPGMEVSLVKIKTIGDKILDVPLAQVGGKGLFVKEIEEAMLRGDIDIAVHSMKDVPTEFPEGLGLHCITEREDPRDAVISRGTKFADLPQGAKIGTSALRRQAQLLKVRPDMEMVIIRGNVETRINKLETEKLDAVILAAAGLKRLGFTEKVAEYLPTDLSIPAIGQGALGIECRLDNEEVKQTIDFFNHPATAYAVRAERALLWRCEGGCQVPIAAFGEVTGSDLKLVGFIASVDGKTSVRGTITGPAADCEKLGIKLAEQLLADGGHAILAEVYQREVSREKEIPV.

Cys241 bears the S-(dipyrrolylmethanemethyl)cysteine mark.

Belongs to the HMBS family. As to quaternary structure, monomer. Requires dipyrromethane as cofactor.

The catalysed reaction is 4 porphobilinogen + H2O = hydroxymethylbilane + 4 NH4(+). It participates in porphyrin-containing compound metabolism; protoporphyrin-IX biosynthesis; coproporphyrinogen-III from 5-aminolevulinate: step 2/4. Functionally, tetrapolymerization of the monopyrrole PBG into the hydroxymethylbilane pre-uroporphyrinogen in several discrete steps. This is Porphobilinogen deaminase from Geotalea daltonii (strain DSM 22248 / JCM 15807 / FRC-32) (Geobacter daltonii).